A 138-amino-acid chain; its full sequence is Aspartate 1-decarboxylase (138 aa).

Ser-25 serves as the catalytic Schiff-base intermediate with substrate; via pyruvic acid. Ser-25 carries the pyruvic acid (Ser) modification. Thr-57 is a substrate binding site. Tyr-58 serves as the catalytic Proton donor. Position 73 to 75 (73 to 75 (GAA)) interacts with substrate. The tract at residues 116 to 138 (ELGGDPAQVPDGSGLKNPRHPEA) is disordered.

The protein belongs to the PanD family. Heterooctamer of four alpha and four beta subunits. Pyruvate is required as a cofactor. Post-translationally, is synthesized initially as an inactive proenzyme, which is activated by self-cleavage at a specific serine bond to produce a beta-subunit with a hydroxyl group at its C-terminus and an alpha-subunit with a pyruvoyl group at its N-terminus.

The protein resides in the cytoplasm. The catalysed reaction is L-aspartate + H(+) = beta-alanine + CO2. It participates in cofactor biosynthesis; (R)-pantothenate biosynthesis; beta-alanine from L-aspartate: step 1/1. Its function is as follows. Catalyzes the pyruvoyl-dependent decarboxylation of aspartate to produce beta-alanine. This chain is Aspartate 1-decarboxylase, found in Corynebacterium jeikeium (strain K411).